We begin with the raw amino-acid sequence, 339 residues long: Aspartate carbamoyltransferase catalytic subunit (339 aa).

2 residues coordinate carbamoyl phosphate: Arg69 and Thr70. An L-aspartate-binding site is contributed by Lys97. Carbamoyl phosphate contacts are provided by Arg119, His149, and Gln152. L-aspartate contacts are provided by Arg182 and Arg237. Residues Gly278 and Pro279 each coordinate carbamoyl phosphate.

This sequence belongs to the aspartate/ornithine carbamoyltransferase superfamily. ATCase family. In terms of assembly, heterododecamer (2C3:3R2) of six catalytic PyrB chains organized as two trimers (C3), and six regulatory PyrI chains organized as three dimers (R2).

It carries out the reaction carbamoyl phosphate + L-aspartate = N-carbamoyl-L-aspartate + phosphate + H(+). It functions in the pathway pyrimidine metabolism; UMP biosynthesis via de novo pathway; (S)-dihydroorotate from bicarbonate: step 2/3. Functionally, catalyzes the condensation of carbamoyl phosphate and aspartate to form carbamoyl aspartate and inorganic phosphate, the committed step in the de novo pyrimidine nucleotide biosynthesis pathway. This is Aspartate carbamoyltransferase catalytic subunit from Hydrogenovibrio crunogenus (strain DSM 25203 / XCL-2) (Thiomicrospira crunogena).